The sequence spans 198 residues: Holliday junction branch migration complex subunit RuvA (198 aa).

The segment at 1–61 is domain I; sequence MTLYKIGEIV…DYIQQTYGFK (61 aa). Residues 62–139 form a domain II region; sequence TFKERLLFTD…KIIQNKEVKK (78 aa). The interval 140 to 144 is flexible linker; it reads FDDIT. Residues 144–198 are domain III; sequence TNIKELKQTLNKLGFKASDIDYAVNNISSTKELDLMVEESINLITTQMHANNQTT.

It belongs to the RuvA family. Homotetramer. Forms an RuvA(8)-RuvB(12)-Holliday junction (HJ) complex. HJ DNA is sandwiched between 2 RuvA tetramers; dsDNA enters through RuvA and exits via RuvB. An RuvB hexamer assembles on each DNA strand where it exits the tetramer. Each RuvB hexamer is contacted by two RuvA subunits (via domain III) on 2 adjacent RuvB subunits; this complex drives branch migration. In the full resolvosome a probable DNA-RuvA(4)-RuvB(12)-RuvC(2) complex forms which resolves the HJ.

It is found in the cytoplasm. Functionally, the RuvA-RuvB-RuvC complex processes Holliday junction (HJ) DNA during genetic recombination and DNA repair, while the RuvA-RuvB complex plays an important role in the rescue of blocked DNA replication forks via replication fork reversal (RFR). RuvA specifically binds to HJ cruciform DNA, conferring on it an open structure. The RuvB hexamer acts as an ATP-dependent pump, pulling dsDNA into and through the RuvAB complex. HJ branch migration allows RuvC to scan DNA until it finds its consensus sequence, where it cleaves and resolves the cruciform DNA. The polypeptide is Holliday junction branch migration complex subunit RuvA (Mycoplasmopsis synoviae (strain 53) (Mycoplasma synoviae)).